We begin with the raw amino-acid sequence, 347 residues long: L-threonine 3-dehydrogenase (347 aa).

Cys42 serves as a coordination point for Zn(2+). Residues Thr44 and His47 each act as charge relay system in the active site. His67, Glu68, Cys97, Cys100, Cys103, and Cys111 together coordinate Zn(2+). Residues Ile179, Glu199, Arg204, 266–268, and 291–292 contribute to the NAD(+) site; these read LGL and IT.

Belongs to the zinc-containing alcohol dehydrogenase family. As to quaternary structure, homotetramer. Requires Zn(2+) as cofactor.

Its subcellular location is the cytoplasm. The enzyme catalyses L-threonine + NAD(+) = (2S)-2-amino-3-oxobutanoate + NADH + H(+). Its pathway is amino-acid degradation; L-threonine degradation via oxydo-reductase pathway; glycine from L-threonine: step 1/2. Its function is as follows. Catalyzes the NAD(+)-dependent oxidation of L-threonine to 2-amino-3-ketobutyrate. The sequence is that of L-threonine 3-dehydrogenase from Caldanaerobacter subterraneus subsp. tengcongensis (strain DSM 15242 / JCM 11007 / NBRC 100824 / MB4) (Thermoanaerobacter tengcongensis).